The primary structure comprises 374 residues: Type IV secretion system protein PtlG homolog (374 aa).

A helical transmembrane segment spans residues 38–56; sequence WMFALVAVALSCLLATGIW. Positions 87-116 are disordered; sequence PREPEPAPLPDMPAAPNPILPQPRPAPPVP. A compositionally biased stretch (pro residues) spans 92–116; sequence PAPLPDMPAAPNPILPQPRPAPPVP.

Belongs to the TrbI/VirB10 family.

It is found in the cell membrane. The protein is Type IV secretion system protein PtlG homolog (ptlG) of Bordetella parapertussis (strain 12822 / ATCC BAA-587 / NCTC 13253).